The sequence spans 97 residues: Large ribosomal subunit protein uL23 (97 aa).

This sequence belongs to the universal ribosomal protein uL23 family. Part of the 50S ribosomal subunit. Contacts protein L29, and trigger factor when it is bound to the ribosome.

One of the early assembly proteins it binds 23S rRNA. One of the proteins that surrounds the polypeptide exit tunnel on the outside of the ribosome. Forms the main docking site for trigger factor binding to the ribosome. The sequence is that of Large ribosomal subunit protein uL23 from Chelativorans sp. (strain BNC1).